The chain runs to 514 residues: Peptide chain release factor 3 (514 aa).

One can recognise a tr-type G domain in the interval 8–268 (KKRRTFAIIS…SFLAFAPEPH (261 aa)). Residues 17–24 (SHPDAGKT), 85–89 (DTPGH), and 139–142 (NKLD) contribute to the GTP site.

It belongs to the TRAFAC class translation factor GTPase superfamily. Classic translation factor GTPase family. PrfC subfamily.

The protein localises to the cytoplasm. Its function is as follows. Increases the formation of ribosomal termination complexes and stimulates activities of RF-1 and RF-2. It binds guanine nucleotides and has strong preference for UGA stop codons. It may interact directly with the ribosome. The stimulation of RF-1 and RF-2 is significantly reduced by GTP and GDP, but not by GMP. This Streptococcus mutans serotype c (strain ATCC 700610 / UA159) protein is Peptide chain release factor 3.